The primary structure comprises 124 residues: Small ribosomal subunit protein uS10z/uS10x (124 aa).

Belongs to the universal ribosomal protein uS10 family.

The chain is Small ribosomal subunit protein uS10z/uS10x (RPS20A) from Arabidopsis thaliana (Mouse-ear cress).